A 50-amino-acid chain; its full sequence is Protein HokA (50 aa).

Residues 7 to 24 (LLSLIVICFTLLFFTWMI) form a helical membrane-spanning segment.

This sequence belongs to the Hok/Gef family.

Its subcellular location is the cell inner membrane. Its function is as follows. Toxic component of a type I toxin-antitoxin (TA) system. When overexpressed kills cells within minutes; causes collapse of the transmembrane potential and arrest of respiration. Its toxic effect is probably neutralized by antisense antitoxin RNA SokA. This Escherichia coli (strain K12) protein is Protein HokA.